We begin with the raw amino-acid sequence, 115 residues long: Large ribosomal subunit protein bL20 (115 aa).

It belongs to the bacterial ribosomal protein bL20 family.

Binds directly to 23S ribosomal RNA and is necessary for the in vitro assembly process of the 50S ribosomal subunit. It is not involved in the protein synthesizing functions of that subunit. The protein is Large ribosomal subunit protein bL20 of Borrelia turicatae (strain 91E135).